Here is a 3066-residue protein sequence, read N- to C-terminus: Genome polyprotein (3066 aa).

The 141-residue stretch at 168-308 folds into the Peptidase S30 domain; sequence TSQCRKPTYV…VENMEDIQHY (141 aa). Residues His-221, Glu-230, and Ser-262 each act as for P1 proteinase activity in the active site. Residues 361 to 364 carry the Involved in interaction with stylet and aphid transmission motif; the sequence is KLSC. An Involved in virions binding and aphid transmission motif is present at residues 617 to 619; sequence PTK. In terms of domain architecture, Peptidase C6 spans 643 to 765; that stretch reads MYIAKEGFCY…QSEMKFYRVG (123 aa). Active-site for helper component proteinase activity residues include Cys-651 and His-724. Positions 1236–1388 constitute a Helicase ATP-binding domain; that stretch reads LVATSSHTEF…TQHPVKLKVE (153 aa). Residue 1249-1256 participates in ATP binding; that stretch reads GAVGSGKS. Positions 1338-1341 match the DECH box motif; that stretch reads DECH. The 160-residue stretch at 1407–1566 folds into the Helicase C-terminal domain; it reads DMIQHGNNLL…GLPVTTQSVS (160 aa). Residues 1891 to 1900 carry the Nuclear localization signal motif; sequence KKGKQKGSTR. An O-(5'-phospho-RNA)-tyrosine modification is found at Tyr-1915. A Peptidase C4 domain is found at 2042–2260; the sequence is SKSVYKGLRD…IAWGSLNLVE (219 aa). Residues His-2087, Asp-2122, and Cys-2192 each act as for nuclear inclusion protein A activity in the active site. Residues 2526–2650 form the RdRp catalytic domain; it reads WVYCHADGSQ…AVSDKDTWLY (125 aa). Residues 2799-2836 are disordered; sequence SLQSGKEKEGDMDAGKDPKKSTSSSKGAGTSSKDVNVG. Basic and acidic residues predominate over residues 2803 to 2818; that stretch reads GKEKEGDMDAGKDPKK. The span at 2819-2831 shows a compositional bias: low complexity; it reads STSSSKGAGTSSK. The residue at position 3048 (Thr-3048) is a Phosphothreonine.

The protein belongs to the potyviridae genome polyprotein family. In terms of assembly, interacts with host eIF4E protein (via cap-binding region); this interaction mediates the translation of the VPg-viral RNA conjugates. Part of a complex that comprises VPg, RNA, host EIF4E and EIF4G; this interaction mediates the translation of the VPg-viral RNA conjugates. VPg is uridylylated by the polymerase and is covalently attached to the 5'-end of the genomic RNA. This uridylylated form acts as a nucleotide-peptide primer for the polymerase. In terms of processing, potyviral RNA is expressed as two polyproteins which undergo post-translational proteolytic processing. Genome polyprotein is processed by NIa-pro, P1 and HC-pro proteinases resulting in the production of at least ten individual proteins. P3N-PIPO polyprotein is cleaved by P1 and HC-pro proteinases resulting in the production of three individual proteins. The P1 proteinase and the HC-pro cleave only their respective C-termini autocatalytically. 6K1 is essential for proper proteolytic separation of P3 from CI.

The protein resides in the host cytoplasmic vesicle. The protein localises to the host nucleus. Its subcellular location is the virion. It carries out the reaction RNA(n) + a ribonucleoside 5'-triphosphate = RNA(n+1) + diphosphate. It catalyses the reaction Hydrolyzes glutaminyl bonds, and activity is further restricted by preferences for the amino acids in P6 - P1' that vary with the species of potyvirus, e.g. Glu-Xaa-Xaa-Tyr-Xaa-Gln-|-(Ser or Gly) for the enzyme from tobacco etch virus. The natural substrate is the viral polyprotein, but other proteins and oligopeptides containing the appropriate consensus sequence are also cleaved.. The enzyme catalyses Hydrolyzes a Gly-|-Gly bond at its own C-terminus, commonly in the sequence -Tyr-Xaa-Val-Gly-|-Gly, in the processing of the potyviral polyprotein.. In terms of biological role, required for aphid transmission and also has proteolytic activity. Only cleaves a Gly-Gly dipeptide at its own C-terminus. Interacts with virions and aphid stylets. Acts as a suppressor of RNA-mediated gene silencing, also known as post-transcriptional gene silencing (PTGS), a mechanism of plant viral defense that limits the accumulation of viral RNAs. May have RNA-binding activity. Functionally, has helicase activity. It may be involved in replication. Indispensable for virus replication. Reduces the abundance of host transcripts related to jasmonic acid biosynthesis therefore altering the host defenses. In order to increase its own stability, decreases host protein degradation pathways. Its function is as follows. Indispensable for virus replication. In terms of biological role, mediates the cap-independent, EIF4E-dependent translation of viral genomic RNAs. Binds to the cap-binding site of host EIF4E and thus interferes with the host EIF4E-dependent mRNA export and translation. VPg-RNA directly binds EIF4E and is a template for transcription. Also forms trimeric complexes with EIF4E-EIF4G, which are templates for translation. Functionally, has RNA-binding and proteolytic activities. An RNA-dependent RNA polymerase that plays an essential role in the virus replication. Its function is as follows. Involved in aphid transmission, cell-to-cell and systemis movement, encapsidation of the viral RNA and in the regulation of viral RNA amplification. This chain is Genome polyprotein, found in Soybean mosaic virus (strain G2) (SMV).